Reading from the N-terminus, the 61-residue chain is UPF0370 protein SG1720 (61 aa).

Residues 3 to 23 (WLADYWWVVLLVLAGMLIGGV) traverse the membrane as a helical segment. Over residues 37-47 (NRPELPPHRDN) the composition is skewed to basic and acidic residues. Residues 37–61 (NRPELPPHRDNNAQWDEEDDWPKKP) are disordered. The segment covering 51-61 (WDEEDDWPKKP) has biased composition (acidic residues).

Belongs to the UPF0370 family.

It localises to the cell membrane. The protein is UPF0370 protein SG1720 of Sodalis glossinidius (strain morsitans).